Reading from the N-terminus, the 488-residue chain is Protein unzipped (488 aa).

An N-terminal signal peptide occupies residues 1–21 (MTSNSCLISLGLLLVLIQILA). Topologically, residues 22-465 (PAKAAEHSVF…DVALAGFGVN (444 aa)) are extracellular. N-linked (GlcNAc...) asparagine glycans are attached at residues asparagine 35, asparagine 232, asparagine 317, and asparagine 374. Residues 380-400 (TTTTTTTTSTSTTTHATTTST) show a composition bias toward low complexity. The segment at 380–453 (TTTTTTTTST…EAPENMSSDP (74 aa)) is disordered. N-linked (GlcNAc...) asparagine glycosylation is present at asparagine 448. Residues 466–486 (AAGSTFIAGSALLTLLLTIFL) form a helical membrane-spanning segment. At 487 to 488 (SL) the chain is on the cytoplasmic side.

It localises to the membrane. Its function is as follows. Required for normal axon patterning during neurogenesis. The sequence is that of Protein unzipped (uzip) from Drosophila melanogaster (Fruit fly).